We begin with the raw amino-acid sequence, 239 residues long: NAD-dependent protein deacylase (239 aa).

In terms of domain architecture, Deacetylase sirtuin-type spans Met1–Met239. Position 8–27 (Gly8–Trp27) interacts with NAD(+). Positions 52 and 55 each coordinate substrate. Gln93 to Asp96 is an NAD(+) binding site. The active-site Proton acceptor is the His111. Residues Gly182–Ser184, Asn207–Asp209, and Ala225 each bind NAD(+).

This sequence belongs to the sirtuin family. Class III subfamily.

Its subcellular location is the cytoplasm. It catalyses the reaction N(6)-acetyl-L-lysyl-[protein] + NAD(+) + H2O = 2''-O-acetyl-ADP-D-ribose + nicotinamide + L-lysyl-[protein]. It carries out the reaction N(6)-succinyl-L-lysyl-[protein] + NAD(+) + H2O = 2''-O-succinyl-ADP-D-ribose + nicotinamide + L-lysyl-[protein]. NAD-dependent lysine deacetylase and desuccinylase that specifically removes acetyl and succinyl groups on target proteins. Modulates the activities of several proteins which are inactive in their acylated form. In Rhodopirellula baltica (strain DSM 10527 / NCIMB 13988 / SH1), this protein is NAD-dependent protein deacylase.